The chain runs to 4568 residues: Dynein heavy chain, cytoplasmic (4568 aa).

The interval 1 to 1826 (MDSGNESSII…VVKMANSQFF (1826 aa)) is stem. Coiled coils occupy residues 587–652 (QTRL…VLGK), 814–844 (KLAE…NVLK), 1241–1274 (QEAL…LDLS), 1324–1340 (RKIR…LKQL), and 1559–1591 (VNMQ…RERS). AAA stretches follow at residues 1827–2049 (YGFE…VLVS), 2118–2394 (QQLS…PTPQ), 2498–2747 (EIES…WVRG), and 2842–3111 (GFYE…GHRV). ATP is bound by residues 1865 to 1872 (GPAGTGKT), 2163 to 2170 (GSSGSGKT), 2537 to 2544 (GPPGSGKT), and 2880 to 2887 (GTAGAGKT). Coiled coils occupy residues 3132–3229 (EKRS…AQVE), 3339–3432 (ARAQ…RDRW), and 3707–3739 (NSVI…EVDA). The segment at 3132 to 3432 (EKRSDLEEEK…SSLRSERDRW (301 aa)) is stalk. AAA regions lie at residues 3496 to 3725 (LSTV…EVAQ) and 3954 to 4169 (AHRV…TLDA). Positions 4359 to 4386 (QLLKDIRRDLNEISAVCRAEKKQNNETR) form a coiled coil.

This sequence belongs to the dynein heavy chain family. As to quaternary structure, consists of at least two heavy chains and a number of intermediate and light chains.

Its subcellular location is the cytoplasm. It localises to the cytoskeleton. Its function is as follows. Cytoplasmic dynein acts as a motor for the intracellular retrograde motility of vesicles and organelles along microtubules. Dynein has ATPase activity; the force-producing power stroke is thought to occur on release of ADP. May play a role in nuclear migration in hypodermal precursor cells. May be involved in the transport of synaptic vesicle components towards the axon of the DA motor neuron. This function may involve the regulation of dynein by pct-1 and/or cdk-5. Involved in the formation of synapses in the dorsal region during synaptic remodeling of DD motor neurons. Required for anterograde trafficking of dense-core vesicles in the DB motor neuron dendrites. Required for the formation of dendritic branches of PVD sensory neurons. May also play a role in GABAergic synaptic vesicle localization in the ventral nerve cord. May play a role in the pairing of homologous chromosomes during meiosis. In Caenorhabditis elegans, this protein is Dynein heavy chain, cytoplasmic.